Consider the following 146-residue polypeptide: Large ribosomal subunit protein bL17 (146 aa).

A compositionally biased stretch (low complexity) spans 124–134 (EASRATRAAAS). The disordered stretch occupies residues 124-146 (EASRATRAAASKKAEEEAASEAE).

It belongs to the bacterial ribosomal protein bL17 family. In terms of assembly, part of the 50S ribosomal subunit. Contacts protein L32.

In Corynebacterium kroppenstedtii (strain DSM 44385 / JCM 11950 / CIP 105744 / CCUG 35717), this protein is Large ribosomal subunit protein bL17.